Reading from the N-terminus, the 88-residue chain is Small ribosomal subunit protein bS20 (88 aa).

It belongs to the bacterial ribosomal protein bS20 family.

Functionally, binds directly to 16S ribosomal RNA. The sequence is that of Small ribosomal subunit protein bS20 from Bartonella quintana (strain Toulouse) (Rochalimaea quintana).